We begin with the raw amino-acid sequence, 526 residues long: D-arabinono-1,4-lactone oxidase (526 aa).

Residues 19-193 form the FAD-binding PCMH-type domain; it reads YSAKPERYFQ…VSATIRVVPG (175 aa). At H56 the chain carries Pros-8alpha-FAD histidine.

The protein belongs to the oxygen-dependent FAD-linked oxidoreductase family. Monomer. FAD is required as a cofactor. The N-terminus is blocked.

It localises to the mitochondrion membrane. It carries out the reaction D-arabinono-1,4-lactone + O2 = dehydro-D-arabinono-1,4-lactone + H2O2 + H(+). The protein operates within cofactor biosynthesis; D-erythroascorbate biosynthesis; dehydro-D-arabinono-1,4-lactone from D-arabinose: step 2/2. Can oxidize L-gulono-1,4-lactone as well as D-arabinono-1,4-lactone and L-galactono-1,4-lactone. In Saccharomyces cerevisiae (strain ATCC 204508 / S288c) (Baker's yeast), this protein is D-arabinono-1,4-lactone oxidase (ALO1).